Consider the following 45-residue polypeptide: Cytochrome b559 subunit beta (45 aa).

Residues 20 to 36 (WLAVHTLAVPTVFFLGA) traverse the membrane as a helical segment. Position 24 (His24) interacts with heme.

Belongs to the PsbE/PsbF family. Heterodimer of an alpha subunit and a beta subunit. PSII is composed of 1 copy each of membrane proteins PsbA, PsbB, PsbC, PsbD, PsbE, PsbF, PsbH, PsbI, PsbJ, PsbK, PsbL, PsbM, PsbT, PsbX, PsbY, PsbZ, Psb30/Ycf12, peripheral proteins PsbO, CyanoQ (PsbQ), PsbU, PsbV and a large number of cofactors. It forms dimeric complexes. Requires heme b as cofactor.

The protein localises to the cellular thylakoid membrane. In terms of biological role, this b-type cytochrome is tightly associated with the reaction center of photosystem II (PSII). PSII is a light-driven water:plastoquinone oxidoreductase that uses light energy to abstract electrons from H(2)O, generating O(2) and a proton gradient subsequently used for ATP formation. It consists of a core antenna complex that captures photons, and an electron transfer chain that converts photonic excitation into a charge separation. This Trichormus variabilis (strain ATCC 29413 / PCC 7937) (Anabaena variabilis) protein is Cytochrome b559 subunit beta.